A 601-amino-acid polypeptide reads, in one-letter code: ATP-dependent rRNA helicase SPB4 (601 aa).

Positions Leu14–Ala42 match the Q motif motif. The region spanning Ile45–Ile228 is the Helicase ATP-binding domain. Ala58–Thr65 is a binding site for ATP. A DEAD box motif is present at residues Asp176–Asp179. Residues Val257–Arg419 enclose the Helicase C-terminal domain. A coiled-coil region spans residues Lys507–Glu575. Residues Leu532 to Glu554 show a composition bias toward basic and acidic residues. Residues Leu532 to Thr576 are disordered.

It belongs to the DEAD box helicase family. DDX55/SPB4 subfamily. As to quaternary structure, component of pre-60S ribosomal complexes.

It localises to the nucleus. The protein resides in the nucleolus. It catalyses the reaction ATP + H2O = ADP + phosphate + H(+). In terms of biological role, ATP-binding RNA helicase involved in the biogenesis of 60S ribosomal subunits. Binds 90S pre-ribosomal particles and dissociates from pre-60S ribosomal particles after processing of 27SB pre-rRNA. Required for the normal formation of 18S rRNA through the processing of pre-rRNAs at sites A0, A1 and A2, and the normal formation of 25S and 5.8S rRNAs through the processing of pre-rRNAs at sites C1 and C2. The polypeptide is ATP-dependent rRNA helicase SPB4 (Meyerozyma guilliermondii (strain ATCC 6260 / CBS 566 / DSM 6381 / JCM 1539 / NBRC 10279 / NRRL Y-324) (Yeast)).